We begin with the raw amino-acid sequence, 130 residues long: Small ribosomal subunit protein uS9 (130 aa).

Residues 102–130 (GFLTRDPRMKERKKYGLKKARRSPQFSKR) are disordered. Positions 111–130 (KERKKYGLKKARRSPQFSKR) are enriched in basic residues.

This sequence belongs to the universal ribosomal protein uS9 family.

The polypeptide is Small ribosomal subunit protein uS9 (Clostridium botulinum (strain ATCC 19397 / Type A)).